Here is a 356-residue protein sequence, read N- to C-terminus: 16-methoxy-2,3-dihydro-3-hydroxytabersonine synthase (356 aa).

7 residues coordinate Zn(2+): Cys49, His71, Cys102, Cys105, Cys108, Cys116, and Cys162. 187-192 (GLGAVG) lines the NAD(+) pocket.

Belongs to the zinc-containing alcohol dehydrogenase family. Requires Zn(2+) as cofactor. Expressed in leaf epidermis.

The enzyme catalyses (3R)-3-hydroxy-16-methoxy-2,3-dihydrotabersonine + A = (3R)-1,2-didehydro-3-hydroxy-16-methoxy-2,3-dihydrotabersonine + AH2. The catalysed reaction is (3R)-3-hydroxy-2,3-dihydrotabersonine + A = (3R)-1,2-didehydro-3-hydroxy-2,3-dihydrotabersonine + AH2. It participates in alkaloid biosynthesis; vindoline biosynthesis. In terms of biological role, converts the unstable imine alcohols produced by CYP71D1V2/T3O into 3-hydroxy-16-methoxy-2,3-dihydrotabersonine or 3-hydroxy-2,3-dihydrotabersonine. The protein is 16-methoxy-2,3-dihydro-3-hydroxytabersonine synthase of Catharanthus roseus (Madagascar periwinkle).